A 75-amino-acid polypeptide reads, in one-letter code: UPF0270 protein PSPPH_1506 (75 aa).

Belongs to the UPF0270 family.

This Pseudomonas savastanoi pv. phaseolicola (strain 1448A / Race 6) (Pseudomonas syringae pv. phaseolicola (strain 1448A / Race 6)) protein is UPF0270 protein PSPPH_1506.